The sequence spans 465 residues: Gamma-aminobutyric acid receptor subunit gamma-1 (465 aa).

An N-terminal signal peptide occupies residues 1–20 (MGSGKVFLFSPSLLWSQTRG). Topologically, residues 21–273 (VRLIFLLLTL…FDLSRRMGYF (253 aa)) are extracellular. N-linked (GlcNAc...) asparagine glycosylation is found at Asn50 and Asn127. Cys188 and Cys202 are disulfide-bonded. Asn245 carries an N-linked (GlcNAc...) asparagine glycan. Residues 274–294 (TIQTYIPCILTVVLSWVSFWI) traverse the membrane as a helical segment. The Cytoplasmic portion of the chain corresponds to 295–300 (NKDAVP). Residues 301–320 (ARTSLGITTVLTMTTLSTIA) form a helical membrane-spanning segment. The Extracellular segment spans residues 321–328 (RKSLPKVS). A helical transmembrane segment spans residues 329–349 (YVTAMDLFVSVCFIFVFAALM). Residues 350 to 444 (EYGTLHYFTS…RIAKIDSYSR (95 aa)) lie on the Cytoplasmic side of the membrane. A helical membrane pass occupies residues 445 to 465 (IFFPTAFALFNLVYWVGYLYL).

This sequence belongs to the ligand-gated ion channel (TC 1.A.9) family. Gamma-aminobutyric acid receptor (TC 1.A.9.5) subfamily. GABRG1 sub-subfamily. Heteropentamer, formed by a combination of alpha (GABRA1-6), beta (GABRB1-3), gamma (GABRG1-3), delta (GABRD), epsilon (GABRE), rho (GABRR1-3), pi (GABRP) and theta (GABRQ) chains, each subunit exhibiting distinct physiological and pharmacological properties. In terms of processing, may be palmitoylated. Expressed in brain.

It is found in the postsynaptic cell membrane. Its subcellular location is the cell membrane. The catalysed reaction is chloride(in) = chloride(out). In terms of biological role, gamma subunit of the heteropentameric ligand-gated chloride channel gated by gamma-aminobutyric acid (GABA), a major inhibitory neurotransmitter in the brain. GABA-gated chloride channels, also named GABA(A) receptors (GABAAR), consist of five subunits arranged around a central pore and contain GABA active binding site(s) located at the alpha and beta subunit interface(s). When activated by GABA, GABAARs selectively allow the flow of chloride anions across the cell membrane down their electrochemical gradient. Chloride influx into the postsynaptic neuron following GABAAR opening decreases the neuron ability to generate a new action potential, thereby reducing nerve transmission. The protein is Gamma-aminobutyric acid receptor subunit gamma-1 of Rattus norvegicus (Rat).